A 253-amino-acid chain; its full sequence is uncharacterized protein (253 aa).

6–30 (IITASDSGIGKECALLLAQQGFDIG) is a binding site for NADP(+). Ser140 is a binding site for substrate. Tyr153 serves as the catalytic Proton acceptor.

Belongs to the short-chain dehydrogenases/reductases (SDR) family.

This is an uncharacterized protein from Escherichia coli (strain K12).